Here is a 406-residue protein sequence, read N- to C-terminus: Corticosteroid-binding globulin (406 aa).

Positions 1-22 are cleaved as a signal peptide; the sequence is MLLTLYACLLWLSTSGLWTSQA. 3 N-linked (GlcNAc...) asparagine glycosylation sites follow: N95, N119, and N223. A cortisol-binding site is contributed by Q253. Residue N259 is glycosylated (N-linked (GlcNAc...) asparagine). Cortisol is bound by residues Q285 and W394.

Belongs to the serpin family.

The protein resides in the secreted. Major transport protein for glucocorticoids and progestins in the blood of almost all vertebrate species. This chain is Corticosteroid-binding globulin (Serpina6), found in Sus scrofa (Pig).